A 473-amino-acid polypeptide reads, in one-letter code: Photosystem II CP43 reaction center protein (473 aa).

The propeptide occupies 1–14 (MKTLYSLRRSYPVE). Position 15 is an N-acetylthreonine (T15). A Phosphothreonine modification is found at T15. Helical transmembrane passes span 69–93 (LFEV…PHLA), 134–155 (LIGP…KDRN), 178–200 (KALY…RKIT), 255–275 (KPFA…LSYS), and 291–312 (WFNN…ASQA). [CaMn4O5] cluster is bound at residue E367. The helical transmembrane segment at 447 to 471 (RARAAAAGFEKGIDRDFEPVLSMTP) threads the bilayer.

This sequence belongs to the PsbB/PsbC family. PsbC subfamily. In terms of assembly, PSII is composed of 1 copy each of membrane proteins PsbA, PsbB, PsbC, PsbD, PsbE, PsbF, PsbH, PsbI, PsbJ, PsbK, PsbL, PsbM, PsbT, PsbX, PsbY, PsbZ, Psb30/Ycf12, at least 3 peripheral proteins of the oxygen-evolving complex and a large number of cofactors. It forms dimeric complexes. Requires Binds multiple chlorophylls and provides some of the ligands for the Ca-4Mn-5O cluster of the oxygen-evolving complex. It may also provide a ligand for a Cl- that is required for oxygen evolution. PSII binds additional chlorophylls, carotenoids and specific lipids. as cofactor.

It is found in the plastid. It localises to the chloroplast thylakoid membrane. Its function is as follows. One of the components of the core complex of photosystem II (PSII). It binds chlorophyll and helps catalyze the primary light-induced photochemical processes of PSII. PSII is a light-driven water:plastoquinone oxidoreductase, using light energy to abstract electrons from H(2)O, generating O(2) and a proton gradient subsequently used for ATP formation. The protein is Photosystem II CP43 reaction center protein of Pinus thunbergii (Japanese black pine).